The primary structure comprises 648 residues: Beta-glucuronidase (648 aa).

The N-terminal stretch at 1-19 (GLAMAWAVLGPLLWGCALA) is a signal peptide. N-linked (GlcNAc...) asparagine glycans are attached at residues asparagine 170, asparagine 269, and asparagine 417. The active-site Proton donor is glutamate 448. A glycan (N-linked (GlcNAc...) asparagine) is linked at asparagine 628.

Belongs to the glycosyl hydrolase 2 family. As to quaternary structure, homotetramer.

It localises to the lysosome. The enzyme catalyses a beta-D-glucuronoside + H2O = D-glucuronate + an alcohol. Inhibited by L-aspartic acid. Functionally, plays an important role in the degradation of dermatan and keratan sulfates. In Chlorocebus aethiops (Green monkey), this protein is Beta-glucuronidase (GUSB).